A 124-amino-acid chain; its full sequence is uncharacterized protein (124 aa).

An N-terminal signal peptide occupies residues 1-19; sequence MRLLVQKVILIYLARYAKS. Transmembrane regions (helical) follow at residues 37 to 57 and 86 to 108; these read IAEF…GVKF and LGAL…IIII.

Its subcellular location is the membrane. This is an uncharacterized protein from Saccharomyces cerevisiae (strain ATCC 204508 / S288c) (Baker's yeast).